The following is a 493-amino-acid chain: Leucine-rich repeat-containing protein 14 (493 aa).

Residues 111-146 (KHALRVLDMTGLLDDGVEQDPGTMSMWDCTAAVART) form an LRR 1; degenerate repeat. An LRR 2; degenerate repeat occupies 194-218 (RLCCRDLRAEDLPMRNTVALLQLLD). The stretch at 219-246 (AGCLRRVDLRFNNLGLRGLSVIIPHVAR) is one LRR 3; degenerate repeat. An LRR 4; degenerate repeat occupies 247–282 (FQHLASLRLHYVHGDSRQPSVDGEDNFRYFLAQMGR). 5 LRR repeats span residues 283–307 (FTCL…LSTL), 308–339 (QSPL…AHLK), 340–360 (KLDL…QGLL), 364–391 (AATL…ILTQ), and 392–416 (CASL…LLRD).

The protein belongs to the PRAME family. LRRC14 subfamily. In terms of assembly, interacts with IKBKB; disrupts IKBKB-IKBKG interaction preventing I-kappa-B-kinase (IKK) core complex formation and leading to a decrease of IKBKB phosphorylation and NF-kappaB activation. Interacts with CHUK.

The protein resides in the cytoplasm. Its function is as follows. Negatively regulates Toll-like receptor-mediated NF-kappa-B signaling by disrupting IKK core complex formation through interaction with IKBKB. This Homo sapiens (Human) protein is Leucine-rich repeat-containing protein 14.